Here is a 344-residue protein sequence, read N- to C-terminus: Ribosomal RNA large subunit methyltransferase Cfr (344 aa).

Residue glutamate 90 is the Proton acceptor of the active site. The 234-residue stretch at 97–330 folds into the Radical SAM core domain; that stretch reads KQGWESFCIS…ATVRTQFGSE (234 aa). A disulfide bond links cysteine 104 and cysteine 335. 3 residues coordinate [4Fe-4S] cluster: cysteine 111, cysteine 115, and cysteine 118. Residues 157 to 158, serine 188, 211 to 213, and asparagine 292 each bind S-adenosyl-L-methionine; these read GE and SLH. Residue cysteine 335 is the S-methylcysteine intermediate of the active site.

The protein belongs to the radical SAM superfamily. RlmN family. Cfr subfamily. It depends on [4Fe-4S] cluster as a cofactor.

Its subcellular location is the cytoplasm. The catalysed reaction is adenosine(2503) in 23S rRNA + 2 reduced [2Fe-2S]-[ferredoxin] + 2 S-adenosyl-L-methionine = 8-methyladenosine(2503) in 23S rRNA + 5'-deoxyadenosine + L-methionine + 2 oxidized [2Fe-2S]-[ferredoxin] + S-adenosyl-L-homocysteine. Specifically methylates position 8 of adenine 2503 in 23S rRNA. Confers resistance to some classes of antibiotics. This Clostridium botulinum (strain Hall / ATCC 3502 / NCTC 13319 / Type A) protein is Ribosomal RNA large subunit methyltransferase Cfr.